A 362-amino-acid polypeptide reads, in one-letter code: Putative transport protein BB_0006 (362 aa).

8 helical membrane passes run 20 to 40 (FYCIVIVLIFIGAFKIAEAVF), 43 to 63 (LAISIVLGFLVYPVYTFLARF), 68 to 88 (FLIVFIIFFLLFSFSYLIFSF), 144 to 164 (EIIGFTSSLVVVFLLLYFLLS), 212 to 232 (ILVFIGLTLFGQDFPLVWAVL), 234 to 254 (FVFNFIPSIGSILAVFFIVIT), 265 to 285 (IVLYVFIYNTSIQMLIGNILE), and 304 to 326 (LFFWGWLWGIVGLLISYPFTVIV).

This sequence belongs to the autoinducer-2 exporter (AI-2E) (TC 2.A.86) family.

It is found in the cell membrane. In Borreliella burgdorferi (strain ATCC 35210 / DSM 4680 / CIP 102532 / B31) (Borrelia burgdorferi), this protein is Putative transport protein BB_0006.